A 515-amino-acid polypeptide reads, in one-letter code: Methionine--tRNA ligase (515 aa).

A 'HIGH' region motif is present at residues 13-23; sequence AYPNGKPHIGH. A 'KMSKS' region motif is present at residues 300 to 304; it reads KMSKS. Residue lysine 303 participates in ATP binding.

This sequence belongs to the class-I aminoacyl-tRNA synthetase family. MetG type 2B subfamily. In terms of assembly, monomer.

It is found in the cytoplasm. The catalysed reaction is tRNA(Met) + L-methionine + ATP = L-methionyl-tRNA(Met) + AMP + diphosphate. Is required not only for elongation of protein synthesis but also for the initiation of all mRNA translation through initiator tRNA(fMet) aminoacylation. In Brucella suis biovar 1 (strain 1330), this protein is Methionine--tRNA ligase.